Consider the following 208-residue polypeptide: Ribosomal RNA large subunit methyltransferase E (208 aa).

S-adenosyl-L-methionine contacts are provided by Gly61, Trp63, Asp81, Asp97, and Asp122. Lys162 acts as the Proton acceptor in catalysis.

It belongs to the class I-like SAM-binding methyltransferase superfamily. RNA methyltransferase RlmE family.

The protein localises to the cytoplasm. It catalyses the reaction uridine(2552) in 23S rRNA + S-adenosyl-L-methionine = 2'-O-methyluridine(2552) in 23S rRNA + S-adenosyl-L-homocysteine + H(+). Functionally, specifically methylates the uridine in position 2552 of 23S rRNA at the 2'-O position of the ribose in the fully assembled 50S ribosomal subunit. This is Ribosomal RNA large subunit methyltransferase E from Pseudomonas putida (strain GB-1).